The primary structure comprises 127 residues: Large ribosomal subunit protein bL12 (127 aa).

The protein belongs to the bacterial ribosomal protein bL12 family. Homodimer. Part of the ribosomal stalk of the 50S ribosomal subunit. Forms a multimeric L10(L12)X complex, where L10 forms an elongated spine to which 2 to 4 L12 dimers bind in a sequential fashion. Binds GTP-bound translation factors.

Functionally, forms part of the ribosomal stalk which helps the ribosome interact with GTP-bound translation factors. Is thus essential for accurate translation. This is Large ribosomal subunit protein bL12 from Streptomyces coelicolor (strain ATCC BAA-471 / A3(2) / M145).